A 342-amino-acid polypeptide reads, in one-letter code: Anthranilate phosphoribosyltransferase (342 aa).

5-phospho-alpha-D-ribose 1-diphosphate is bound by residues Gly84, 87–88 (GD), Thr92, 94–97 (NITT), 112–120 (KHGNRSVSS), and Ser124. Gly84 lines the anthranilate pocket. Thr96 is a binding site for Mg(2+). Asn115 lines the anthranilate pocket. Position 170 (Arg170) interacts with anthranilate. Mg(2+) contacts are provided by Asp228 and Glu229.

The protein belongs to the anthranilate phosphoribosyltransferase family. In terms of assembly, homodimer. Requires Mg(2+) as cofactor.

It carries out the reaction N-(5-phospho-beta-D-ribosyl)anthranilate + diphosphate = 5-phospho-alpha-D-ribose 1-diphosphate + anthranilate. It participates in amino-acid biosynthesis; L-tryptophan biosynthesis; L-tryptophan from chorismate: step 2/5. In terms of biological role, catalyzes the transfer of the phosphoribosyl group of 5-phosphorylribose-1-pyrophosphate (PRPP) to anthranilate to yield N-(5'-phosphoribosyl)-anthranilate (PRA). In Corynebacterium efficiens (strain DSM 44549 / YS-314 / AJ 12310 / JCM 11189 / NBRC 100395), this protein is Anthranilate phosphoribosyltransferase.